A 468-amino-acid polypeptide reads, in one-letter code: 6-phosphogluconate dehydrogenase, decarboxylating (468 aa).

NADP(+) is bound by residues Gly-10–Gly-15, Asn-33–Ser-35, Val-74–Ala-76, and Asn-102. Residues Asn-102 and Ser-128–Gly-130 each bind substrate. Lys-183 acts as the Proton acceptor in catalysis. His-186–Asn-187 provides a ligand contact to substrate. Residue Glu-190 is the Proton donor of the active site. Residues Tyr-191, Lys-260, Arg-287, Arg-445, and His-451 each contribute to the substrate site.

Belongs to the 6-phosphogluconate dehydrogenase family. In terms of assembly, homodimer.

The enzyme catalyses 6-phospho-D-gluconate + NADP(+) = D-ribulose 5-phosphate + CO2 + NADPH. Its pathway is carbohydrate degradation; pentose phosphate pathway; D-ribulose 5-phosphate from D-glucose 6-phosphate (oxidative stage): step 3/3. Functionally, catalyzes the oxidative decarboxylation of 6-phosphogluconate to ribulose 5-phosphate and CO(2), with concomitant reduction of NADP to NADPH. The sequence is that of 6-phosphogluconate dehydrogenase, decarboxylating (gnd) from Klebsiella pneumoniae.